A 481-amino-acid polypeptide reads, in one-letter code: Phosphoenolpyruvate phosphatase (481 aa).

Residues 1-36 (MPIYTSRSCFYLLLFHIILLCSVDKTLCRQTSSFVR) form the signal peptide. Asparagine 109 carries an N-linked (GlcNAc...) asparagine glycan. 3 residues coordinate Fe cation: aspartate 168, aspartate 195, and tyrosine 198. Aspartate 195 is a Zn(2+) binding site. Asparagine 206 carries an N-linked (GlcNAc...) asparagine glycan. The Zn(2+) site is built by asparagine 232 and histidine 317. Position 232 (asparagine 232) interacts with substrate. Histidine 327 functions as the Proton donor in the catalytic mechanism. A Zn(2+)-binding site is contributed by histidine 354. 354-356 (HVH) is a substrate binding site. Residue histidine 356 participates in Fe cation binding. Residues asparagine 370 and asparagine 427 are each glycosylated (N-linked (GlcNAc...) asparagine).

This sequence belongs to the metallophosphoesterase superfamily. Purple acid phosphatase family.

The protein localises to the vacuole lumen. It carries out the reaction phosphoenolpyruvate + H2O = pyruvate + phosphate. Phosphoenolpyruvate phosphatase that probably operates in the vacuole to release phosphate from phosphoenolpyruvate (PEP) under phosphorus starvation. This is Phosphoenolpyruvate phosphatase (ACPEPP) from Allium cepa (Onion).